The following is a 51-amino-acid chain: ATP synthase F(1) complex subunit epsilon, mitochondrial (51 aa).

An N6-acetyllysine; alternate mark is found at K21, K32, and K37. N6-succinyllysine; alternate occurs at positions 21, 32, and 37. K44 carries the post-translational modification N6-acetyllysine.

This sequence belongs to the eukaryotic ATPase epsilon family. Component of the ATP synthase complex composed at least of ATP5F1A/subunit alpha, ATP5F1B/subunit beta, ATP5MC1/subunit c (homooctomer), MT-ATP6/subunit a, MT-ATP8/subunit 8, ATP5ME/subunit e, ATP5MF/subunit f, ATP5MG/subunit g, ATP5MK/subunit k, ATP5MJ/subunit j, ATP5F1C/subunit gamma, ATP5F1D/subunit delta, ATP5F1E/subunit epsilon, ATP5PF/subunit F6, ATP5PB/subunit b, ATP5PD/subunit d, ATP5PO/subunit OSCP. ATP synthase complex consists of a soluble F(1) head domain (subunits alpha(3) and beta(3)) - the catalytic core - and a membrane F(0) domain - the membrane proton channel (subunits c, a, 8, e, f, g, k and j). These two domains are linked by a central stalk (subunits gamma, delta, and epsilon) rotating inside the F1 region and a stationary peripheral stalk (subunits F6, b, d, and OSCP). Ubiquitous.

It is found in the mitochondrion. The protein resides in the mitochondrion inner membrane. Functionally, subunit epsilon, of the mitochondrial membrane ATP synthase complex (F(1)F(0) ATP synthase or Complex V) that produces ATP from ADP in the presence of a proton gradient across the membrane which is generated by electron transport complexes of the respiratory chain. ATP synthase complex consist of a soluble F(1) head domain - the catalytic core - and a membrane F(1) domain - the membrane proton channel. These two domains are linked by a central stalk rotating inside the F(1) region and a stationary peripheral stalk. During catalysis, ATP synthesis in the catalytic domain of F(1) is coupled via a rotary mechanism of the central stalk subunits to proton translocation. In vivo, can only synthesize ATP although its ATP hydrolase activity can be activated artificially in vitro. May be essential for the assembly of F(1) and may play an important role in the incorporation of the hydrophobic subunit c into the F(1)-c oligomer rotor of the mitochondrial ATP synthase complex. The sequence is that of ATP synthase F(1) complex subunit epsilon, mitochondrial from Homo sapiens (Human).